Consider the following 330-residue polypeptide: Probable inactive heme oxygenase 2, chloroplastic (330 aa).

2 stretches are compositionally biased toward low complexity: residues 1 to 13 (MPLA…SAVV) and 56 to 69 (AAEA…VDEA). Disordered stretches follow at residues 1–27 (MPLA…RARP), 50–82 (PSPP…YPRQ), and 107–156 (TTLK…LEGE). Residues 1–47 (MPLAAAVAASAVVPPRPPPPPPRRARPLRSFTGLILTRDLAALTVAR) constitute a chloroplast transit peptide. The segment covering 114 to 151 (TGAEEEVGDGVSEDASASEEEEEEEDDDDVVEEEEEGA) has biased composition (acidic residues).

The protein belongs to the heme oxygenase family.

It localises to the plastid. Its subcellular location is the chloroplast. In terms of biological role, probable inactive heme oxygenase that may play a role in the regulation of phytochrome assembly and photomorphogenesis. The polypeptide is Probable inactive heme oxygenase 2, chloroplastic (HO2) (Oryza sativa subsp. japonica (Rice)).